We begin with the raw amino-acid sequence, 582 residues long: Methionine--tRNA ligase (582 aa).

Residues 24–34 carry the 'HIGH' region motif; sequence PYIYAVPHLGN. Residues C156, C159, C169, and C172 each coordinate Zn(2+). The short motif at 346–350 is the 'KMSKS' region element; it reads KFSKS. K349 is an ATP binding site.

It belongs to the class-I aminoacyl-tRNA synthetase family. MetG type 1 subfamily. Requires Zn(2+) as cofactor.

Its subcellular location is the cytoplasm. It catalyses the reaction tRNA(Met) + L-methionine + ATP = L-methionyl-tRNA(Met) + AMP + diphosphate. Is required not only for elongation of protein synthesis but also for the initiation of all mRNA translation through initiator tRNA(fMet) aminoacylation. The protein is Methionine--tRNA ligase of Caldivirga maquilingensis (strain ATCC 700844 / DSM 13496 / JCM 10307 / IC-167).